We begin with the raw amino-acid sequence, 332 residues long: Beta-ketoacyl-[acyl-carrier-protein] synthase III (332 aa).

Residues C112 and H252 contribute to the active site. Residues 253 to 257 (QANLR) form an ACP-binding region. The active site involves N282.

The protein belongs to the thiolase-like superfamily. FabH family. As to quaternary structure, homodimer.

The protein localises to the cytoplasm. It carries out the reaction malonyl-[ACP] + acetyl-CoA + H(+) = 3-oxobutanoyl-[ACP] + CO2 + CoA. Its pathway is lipid metabolism; fatty acid biosynthesis. Functionally, catalyzes the condensation reaction of fatty acid synthesis by the addition to an acyl acceptor of two carbons from malonyl-ACP. Catalyzes the first condensation reaction which initiates fatty acid synthesis and may therefore play a role in governing the total rate of fatty acid production. Possesses both acetoacetyl-ACP synthase and acetyl transacylase activities. Its substrate specificity determines the biosynthesis of branched-chain and/or straight-chain of fatty acids. In Syntrophomonas wolfei subsp. wolfei (strain DSM 2245B / Goettingen), this protein is Beta-ketoacyl-[acyl-carrier-protein] synthase III.